The chain runs to 740 residues: ATP-dependent RNA helicase DBP7 (740 aa).

The disordered stretch occupies residues 1–104; that stretch reads MSFNDDDDGM…SNVEQPARVT (104 aa). The span at 13 to 25 shows a compositional bias: polar residues; sequence NFTTDVSDASETV. Residues 43-60 show a composition bias toward basic and acidic residues; that stretch reads MMMEGRKPRVRGEKRPLE. The span at 72 to 81 shows a compositional bias: polar residues; it reads ASSSNSTSAQ. Residues 149–178 carry the Q motif motif; it reads DTFDSFGITDTMVSHLNVKMKISKPTKIQK. The Helicase ATP-binding domain occupies 182 to 376; that stretch reads PPFLQAQNDL…NVTLQNYKLI (195 aa). 195–202 is a binding site for ATP; that stretch reads AQTGSGKT. Residues 311 to 314 carry the DEAD box motif; sequence DEGD. Positions 414–607 constitute a Helicase C-terminal domain; the sequence is TITQKHYKEG…VLRPAFEGLN (194 aa). The interval 695 to 721 is disordered; it reads SMGLQQGKAGAAAAASQKKPKEDSKSK. Over residues 697–711 the composition is skewed to low complexity; that stretch reads GLQQGKAGAAAAASQ.

Belongs to the DEAD box helicase family. DDX31/DBP7 subfamily.

Its subcellular location is the nucleus. It localises to the nucleolus. It catalyses the reaction ATP + H2O = ADP + phosphate + H(+). ATP-binding RNA helicase involved in the biogenesis of 60S ribosomal subunits and is required for the normal formation of 25S and 5.8S rRNAs. The chain is ATP-dependent RNA helicase DBP7 (DBP7) from Kluyveromyces lactis (strain ATCC 8585 / CBS 2359 / DSM 70799 / NBRC 1267 / NRRL Y-1140 / WM37) (Yeast).